We begin with the raw amino-acid sequence, 98 residues long: Large ribosomal subunit protein eL21 (98 aa).

A compositionally biased stretch (basic residues) spans 1–24 (MVKKAHSFRRKTRGKLSKHPRRRG). The interval 1 to 27 (MVKKAHSFRRKTRGKLSKHPRRRGLPP) is disordered.

This sequence belongs to the eukaryotic ribosomal protein eL21 family.

The sequence is that of Large ribosomal subunit protein eL21 from Thermococcus gammatolerans (strain DSM 15229 / JCM 11827 / EJ3).